The sequence spans 216 residues: Probable GTP-binding protein EngB (216 aa).

The EngB-type G domain maps to 43–216 (DRIEVCFAGR…TLRSIIAHLD (174 aa)). Residues 51–58 (GRSNVGKS), 78–82 (GRTQE), 96–99 (DLPG), 163–166 (TKAD), and 197–199 (TSS) each bind GTP. Mg(2+)-binding residues include S58 and T80.

It belongs to the TRAFAC class TrmE-Era-EngA-EngB-Septin-like GTPase superfamily. EngB GTPase family. Mg(2+) is required as a cofactor.

Necessary for normal cell division and for the maintenance of normal septation. In Ruegeria sp. (strain TM1040) (Silicibacter sp.), this protein is Probable GTP-binding protein EngB.